The chain runs to 271 residues: Insulin-like growth factor-binding protein 5 (271 aa).

Positions 1-19 (MVISVVLLLLAACAVPAQG) are cleaved as a signal peptide. The 81-residue stretch at 22-102 (SFVHCEPCDE…LHGRGVCLNE (81 aa)) folds into the IGFBP N-terminal domain. 6 disulfide bridges follow: Cys-26-Cys-52, Cys-29-Cys-54, Cys-37-Cys-55, Cys-44-Cys-58, Cys-66-Cys-79, and Cys-73-Cys-99. Positions 109-121 (TKIERDSREHEEP) are enriched in basic and acidic residues. The segment at 109-129 (TKIERDSREHEEPTTSEMAEE) is disordered. Ser-115 bears the Phosphoserine mark. The Thyroglobulin type-1 domain occupies 188 to 262 (QGPCRRHMEA…MEYVDGDFQC (75 aa)). 3 disulfide bridges follow: Cys-191–Cys-218, Cys-229–Cys-240, and Cys-242–Cys-262.

As to quaternary structure, interacts with IGF1; this interaction enhances the growth stimulatory effects of IGF1 on fibroblasts. Interacts with CAV1; this interaction allows trafficking of IGFBP5 from the plasma membrane to the nucleus. Interacts with NCL; this interaction is necessary for IGFBP5 localization to the nucleus. In terms of tissue distribution, mostly in kidney.

Its subcellular location is the secreted. The protein localises to the cytoplasm. It is found in the nucleus. Multifunctional protein that plays a critical role in regulating the availability of IGFs to their receptors and thereby regulates IGF-mediated cellular processes including proliferation, differentiation, and apoptosis in a cell-type specific manner. Increases the cell proliferation of osteoblasts, intestinal smooth muscle cells and neuroblastoma cells. Enhances adhesion and survival of epithelial cells but decreases adhesion of mesenchymal cells. Once secreted, acts as a major mediator of mTORC1-dependent feedback inhibition of IGF1 signaling. Also plays a role in the induction of extracellular matrix (ECM) production and deposition independently of its nuclear translocation and binding to IGFs. Acts itself as a growth factor that can act independently of IGFs to regulate bone formation. Acts as a ligand for the ROR1 receptor which triggers formation of ROR1/HER2 heterodimer to enhance CREB oncogenic signaling. The sequence is that of Insulin-like growth factor-binding protein 5 (Igfbp5) from Rattus norvegicus (Rat).